The primary structure comprises 166 residues: Large ribosomal subunit protein uL10 (166 aa).

Belongs to the universal ribosomal protein uL10 family. In terms of assembly, part of the ribosomal stalk of the 50S ribosomal subunit. The N-terminus interacts with L11 and the large rRNA to form the base of the stalk. The C-terminus forms an elongated spine to which L12 dimers bind in a sequential fashion forming a multimeric L10(L12)X complex.

Functionally, forms part of the ribosomal stalk, playing a central role in the interaction of the ribosome with GTP-bound translation factors. This chain is Large ribosomal subunit protein uL10, found in Pseudomonas fluorescens (strain ATCC BAA-477 / NRRL B-23932 / Pf-5).